The sequence spans 353 residues: Uroporphyrinogen decarboxylase (353 aa).

Substrate contacts are provided by residues Arg-33–Arg-37, Asp-82, Tyr-158, Ser-213, and His-332.

Belongs to the uroporphyrinogen decarboxylase family. In terms of assembly, homodimer.

The protein resides in the cytoplasm. The catalysed reaction is uroporphyrinogen III + 4 H(+) = coproporphyrinogen III + 4 CO2. It functions in the pathway porphyrin-containing compound metabolism; protoporphyrin-IX biosynthesis; coproporphyrinogen-III from 5-aminolevulinate: step 4/4. Catalyzes the decarboxylation of four acetate groups of uroporphyrinogen-III to yield coproporphyrinogen-III. The polypeptide is Uroporphyrinogen decarboxylase (Gluconobacter oxydans (strain 621H) (Gluconobacter suboxydans)).